The primary structure comprises 779 residues: Protein WEAK CHLOROPLAST MOVEMENT UNDER BLUE LIGHT-like 1 (779 aa).

The segment at 1–119 (MEDLKTTDAL…NAVSPRPLYS (119 aa)) is disordered. A compositionally biased stretch (polar residues) spans 79–88 (DSPTTPSFVS). Phosphoserine is present on Ser-139. Coiled coils occupy residues 182-503 (RMKV…KQRE), 532-587 (KETR…ESRL), and 657-715 (AVSE…KWRE). Positions 650–661 (ANARVAAAVSEV) are enriched in low complexity. Disordered regions lie at residues 650–674 (ANARVAAAVSEVGEAKETEKRSLEK) and 694–759 (EKAE…NPVK). 2 stretches are compositionally biased toward basic and acidic residues: residues 662–674 (GEAKETEKRSLEK) and 694–718 (EKAEKAKEGKLGVEQELRKWREVSE). Positions 741–753 (TSVSNETETNPIP) are enriched in polar residues.

Belongs to the WEB family.

This chain is Protein WEAK CHLOROPLAST MOVEMENT UNDER BLUE LIGHT-like 1 (WEL1), found in Arabidopsis thaliana (Mouse-ear cress).